Consider the following 317-residue polypeptide: Sulfate adenylyltransferase subunit 2 (317 aa).

Positions 1–10 (MPHTLPETEL) are enriched in basic and acidic residues. Disordered stretches follow at residues 1–21 (MPHTLPETELHNPQSTKPPLD) and 295–317 (RQGRAIDRDQAGSMEKKKREGYF).

Belongs to the PAPS reductase family. CysD subfamily. As to quaternary structure, heterodimer composed of CysD, the smaller subunit, and CysN.

The catalysed reaction is sulfate + ATP + H(+) = adenosine 5'-phosphosulfate + diphosphate. Its pathway is sulfur metabolism; hydrogen sulfide biosynthesis; sulfite from sulfate: step 1/3. With CysN forms the ATP sulfurylase (ATPS) that catalyzes the adenylation of sulfate producing adenosine 5'-phosphosulfate (APS) and diphosphate, the first enzymatic step in sulfur assimilation pathway. APS synthesis involves the formation of a high-energy phosphoric-sulfuric acid anhydride bond driven by GTP hydrolysis by CysN coupled to ATP hydrolysis by CysD. This chain is Sulfate adenylyltransferase subunit 2 (cysD), found in Rhizobium meliloti (strain 1021) (Ensifer meliloti).